A 625-amino-acid chain; its full sequence is Dual specificity protein phosphatase 8 (625 aa).

Positions 23 to 138 (GPGGPLVIDS…FSSCFPGLCE (116 aa)) constitute a Rhodanese domain. A Tyrosine-protein phosphatase domain is found at 160–302 (GLTRILPHLY…LLEYERSLKL (143 aa)). The active-site Phosphocysteine intermediate is Cys-246. The interval 306 to 586 (LQGDPGTPSG…PAPETQFKRR (281 aa)) is disordered. Positions 380–389 (SSDRLQDTNR) are enriched in basic and acidic residues. Over residues 431-448 (AALGLSSPSPDSPDAAPE) the composition is skewed to low complexity. Residues 555 to 570 (DLRRREAARAEPRDAR) show a composition bias toward basic and acidic residues.

It belongs to the protein-tyrosine phosphatase family. Non-receptor class dual specificity subfamily. In terms of assembly, monomer. In terms of tissue distribution, abundant in brain, heart and skeletal muscle.

The protein resides in the cytoplasm. The protein localises to the nucleus. The catalysed reaction is O-phospho-L-tyrosyl-[protein] + H2O = L-tyrosyl-[protein] + phosphate. The enzyme catalyses O-phospho-L-seryl-[protein] + H2O = L-seryl-[protein] + phosphate. It catalyses the reaction O-phospho-L-threonyl-[protein] + H2O = L-threonyl-[protein] + phosphate. Functionally, has phosphatase activity with synthetic phosphatase substrates and negatively regulates mitogen-activated protein kinase activity, presumably by catalysing their dephosphorylation. Expected to display protein phosphatase activity toward phosphotyrosine, phosphoserine and phosphothreonine residues. The sequence is that of Dual specificity protein phosphatase 8 (DUSP8) from Homo sapiens (Human).